Consider the following 126-residue polypeptide: Basic phospholipase A2 1 (126 aa).

The propeptide occupies 1-7 (SNRPMPL). Intrachain disulfides connect C18-C78, C33-C125, C35-C51, C50-C106, C57-C99, C67-C92, and C85-C97. Y34, G36, and G38 together coordinate Ca(2+). H54 is an active-site residue. D55 contributes to the Ca(2+) binding site. D100 is a catalytic residue.

This sequence belongs to the phospholipase A2 family. Group I subfamily. D49 sub-subfamily. As to quaternary structure, heterodimer formed between two homologous isoforms: isoform 1 and isoform 2. It depends on Ca(2+) as a cofactor. In terms of tissue distribution, expressed by the venom gland.

The protein resides in the secreted. It catalyses the reaction a 1,2-diacyl-sn-glycero-3-phosphocholine + H2O = a 1-acyl-sn-glycero-3-phosphocholine + a fatty acid + H(+). PLA2 catalyzes the calcium-dependent hydrolysis of the 2-acyl groups in 3-sn-phosphoglycerides. The polypeptide is Basic phospholipase A2 1 (Naja sagittifera (Andaman cobra)).